The chain runs to 194 residues: Oligoribonuclease (194 aa).

Residues 11–174 (LIWIDLEMTG…SDVRDSINEL (164 aa)) enclose the Exonuclease domain. Tyrosine 132 is a catalytic residue.

The protein belongs to the oligoribonuclease family.

The protein resides in the cytoplasm. In terms of biological role, 3'-to-5' exoribonuclease specific for small oligoribonucleotides. The polypeptide is Oligoribonuclease (Xanthomonas oryzae pv. oryzae (strain MAFF 311018)).